The following is an 83-amino-acid chain: ATP synthase subunit 9, mitochondrial (83 aa).

2 helical membrane-spanning segments follow: residues 8 to 28 and 45 to 72; these read IGAGAATIASAGAAIGIGNVL and SFGYAILGFALTEAIASFAPMMAFLISS.

This sequence belongs to the ATPase C chain family. F-type ATPases have 2 components, CF(1) - the catalytic core - and CF(0) - the membrane proton channel. CF(1) has five subunits: alpha(3), beta(3), gamma(1), delta(1), epsilon(1). CF(0) has three main subunits: a, b and c.

The protein resides in the mitochondrion membrane. Its function is as follows. This protein is one of the chains of the nonenzymatic membrane component (F0) of mitochondrial ATPase. This chain is ATP synthase subunit 9, mitochondrial (ATP9), found in Helianthus annuus (Common sunflower).